We begin with the raw amino-acid sequence, 172 residues long: Photosystem I assembly protein Ycf3 (172 aa).

3 TPR repeats span residues 35–68, 72–105, and 120–153; these read AFSY…EEDP, SYIL…NSQL, and GVKA…SPNN.

The protein belongs to the Ycf3 family.

It localises to the plastid. It is found in the chloroplast thylakoid membrane. Its function is as follows. Essential for the assembly of the photosystem I (PSI) complex. May act as a chaperone-like factor to guide the assembly of the PSI subunits. This Guillardia theta (Cryptophyte) protein is Photosystem I assembly protein Ycf3.